A 274-amino-acid polypeptide reads, in one-letter code: Probable lipoprotein peptidase YaeF (274 aa).

The N-terminal stretch at 1–20 (MDKPKAYCRLFLPSFLLLSA) is a signal peptide. Cys21 is lipidated: N-palmitoyl cysteine. Cys21 carries S-diacylglycerol cysteine lipidation. The Nucleophile role is filled by Cys207. The Proton acceptor role is filled by His257.

It localises to the cell inner membrane. The sequence is that of Probable lipoprotein peptidase YaeF (yaeF) from Escherichia coli (strain K12).